Consider the following 655-residue polypeptide: Protein nipi-3 (655 aa).

Residues 1-35 are disordered; the sequence is MARTKCKTKTVANPRTGVRKTAKDLSEPVRQDAVS. A compositionally biased stretch (basic and acidic residues) spans 21 to 35; the sequence is TAKDLSEPVRQDAVS. The region spanning 200 to 470 is the Protein kinase domain; that stretch reads IGIFVIYGTG…NQVNGDFPEI (271 aa). Residues 206 to 214 and K235 contribute to the ATP site; that span reads YGTGLVTRA.

The protein belongs to the protein kinase superfamily. CAMK Ser/Thr protein kinase family. May interact with transcription factor cebp-1 (via N-terminus). As to expression, expressed in epidermis, pharynx, intestine, a subset of head neurons and motoneurons.

The protein localises to the nucleus. Adapter protein that regulates different signaling pathways. Required for larval development and viability. Involved in negatively modulating pmk-1 p38/MAPK signaling. Involved in innate immunity, acting either in a manner dependent upon, or independent of, the pmk-1 or pmk-3 p38/MAPK pathways. Has a protective role in response to infection by the Gram-negative bacterium P.aeruginosa, acting by negatively modulating expression of cebp-1, and regulating the pmk-1 p38/MAPK pathway, leading to activation of transcription factor skn-1. Required to prevent P.aeruginosa toxin ToxA-mediated lethality, probably acting via modulating the effects of translational inhibition caused by the toxin. By regulating the up-regulation in the epidermis of antimicrobial peptides nlp-29 and nlp-31, plays a role in resistance to fungal infection. This chain is Protein nipi-3, found in Caenorhabditis elegans.